An 814-amino-acid polypeptide reads, in one-letter code: Acyl-coenzyme A dehydrogenase (814 aa).

Glu-497 acts as the Proton acceptor in catalysis.

It belongs to the acyl-CoA dehydrogenase family. The cofactor is FAD.

It carries out the reaction a medium-chain 2,3-saturated fatty acyl-CoA + oxidized [electron-transfer flavoprotein] + H(+) = a medium-chain (2E)-enoyl-CoA + reduced [electron-transfer flavoprotein]. The catalysed reaction is a long-chain 2,3-saturated fatty acyl-CoA + oxidized [electron-transfer flavoprotein] + H(+) = a long-chain (2E)-enoyl-CoA + reduced [electron-transfer flavoprotein]. The protein operates within lipid metabolism; fatty acid beta-oxidation. Catalyzes the dehydrogenation of acyl-coenzymes A (acyl-CoAs) to 2-enoyl-CoAs, the first step of the beta-oxidation cycle of fatty acid degradation. Is required for the utilization of medium- and long-chain fatty acids as sole carbon sources for growth. This is Acyl-coenzyme A dehydrogenase (fadE) from Escherichia coli O157:H7.